A 155-amino-acid polypeptide reads, in one-letter code: 6,7-dimethyl-8-ribityllumazine synthase (155 aa).

Residues Phe-24, 58 to 60 (AFE), and 82 to 84 (VII) each bind 5-amino-6-(D-ribitylamino)uracil. 87–88 (ST) is a (2S)-2-hydroxy-3-oxobutyl phosphate binding site. His-90 functions as the Proton donor in the catalytic mechanism. 5-amino-6-(D-ribitylamino)uracil is bound at residue Phe-115. Arg-129 is a (2S)-2-hydroxy-3-oxobutyl phosphate binding site.

Belongs to the DMRL synthase family.

The catalysed reaction is (2S)-2-hydroxy-3-oxobutyl phosphate + 5-amino-6-(D-ribitylamino)uracil = 6,7-dimethyl-8-(1-D-ribityl)lumazine + phosphate + 2 H2O + H(+). It functions in the pathway cofactor biosynthesis; riboflavin biosynthesis; riboflavin from 2-hydroxy-3-oxobutyl phosphate and 5-amino-6-(D-ribitylamino)uracil: step 1/2. Its function is as follows. Catalyzes the formation of 6,7-dimethyl-8-ribityllumazine by condensation of 5-amino-6-(D-ribitylamino)uracil with 3,4-dihydroxy-2-butanone 4-phosphate. This is the penultimate step in the biosynthesis of riboflavin. This is 6,7-dimethyl-8-ribityllumazine synthase from Chlorobium phaeobacteroides (strain DSM 266 / SMG 266 / 2430).